A 310-amino-acid chain; its full sequence is Proline iminopeptidase (310 aa).

Residues L41–E288 enclose the AB hydrolase-1 domain. S116 functions as the Nucleophile in the catalytic mechanism. D255 is a catalytic residue. The Proton donor role is filled by H282.

The protein belongs to the peptidase S33 family. Part of the tricorn proteolytic complex.

It catalyses the reaction Release of N-terminal proline from a peptide.. Cleaves H-Pro-AMC as well as a wide spectrum of amino acid substrates and several peptide substrates without a proline at the N-terminus. In conjunction with the three factors F1, F2 and F3, Tricorn degrades oligopeptides in a sequential manner, yielding free amino acids. This is Proline iminopeptidase (pip) from Saccharolobus solfataricus (strain ATCC 35092 / DSM 1617 / JCM 11322 / P2) (Sulfolobus solfataricus).